The following is a 257-amino-acid chain: Aspartate/glutamate leucyltransferase (257 aa).

The protein belongs to the R-transferase family. Bpt subfamily.

The protein localises to the cytoplasm. It catalyses the reaction N-terminal L-glutamyl-[protein] + L-leucyl-tRNA(Leu) = N-terminal L-leucyl-L-glutamyl-[protein] + tRNA(Leu) + H(+). It carries out the reaction N-terminal L-aspartyl-[protein] + L-leucyl-tRNA(Leu) = N-terminal L-leucyl-L-aspartyl-[protein] + tRNA(Leu) + H(+). Its function is as follows. Functions in the N-end rule pathway of protein degradation where it conjugates Leu from its aminoacyl-tRNA to the N-termini of proteins containing an N-terminal aspartate or glutamate. The sequence is that of Aspartate/glutamate leucyltransferase from Rhodopseudomonas palustris (strain HaA2).